A 380-amino-acid chain; its full sequence is Cytochrome b (380 aa).

4 helical membrane passes run 34-54, 78-99, 114-134, and 179-199; these read FGSLLAVCLATQIITGLLLAA, WLIRNLHANGASFFFICIYLHI, WNTGVILLLTLMATAFVGYVL, and FFALHFLLPFIIAGITIIHLA. Heme b-binding residues include H84 and H98. H183 and H197 together coordinate heme b. H202 is a binding site for a ubiquinone. Transmembrane regions (helical) follow at residues 227–247, 289–309, 321–341, and 348–368; these read LKDILGLALMITPLLTLALFS, LGGVLALAASVFILFLIPLLH, LSQLLFWLLAANLFILTWIGS, and FIIIGQLASLSYFTTLLILFP.

It belongs to the cytochrome b family. In terms of assembly, the cytochrome bc1 complex contains 11 subunits: 3 respiratory subunits (MT-CYB, CYC1 and UQCRFS1), 2 core proteins (UQCRC1 and UQCRC2) and 6 low-molecular weight proteins (UQCRH/QCR6, UQCRB/QCR7, UQCRQ/QCR8, UQCR10/QCR9, UQCR11/QCR10 and a cleavage product of UQCRFS1). This cytochrome bc1 complex then forms a dimer. Requires heme b as cofactor.

The protein resides in the mitochondrion inner membrane. In terms of biological role, component of the ubiquinol-cytochrome c reductase complex (complex III or cytochrome b-c1 complex) that is part of the mitochondrial respiratory chain. The b-c1 complex mediates electron transfer from ubiquinol to cytochrome c. Contributes to the generation of a proton gradient across the mitochondrial membrane that is then used for ATP synthesis. The polypeptide is Cytochrome b (MT-CYB) (Cyrtonyx montezumae (Montezuma quail)).